The following is a 165-amino-acid chain: Transcription elongation factor A protein-like 1 (165 aa).

Residues 1 to 101 are disordered; the sequence is MENTRSENEE…EQPPCGVGKH (101 aa). The segment covering 33–60 has biased composition (acidic residues); it reads CSEEDQSSEDLSSEEQSSEEEFFPEELL.

This sequence belongs to the TFS-II family. TFA subfamily.

The protein resides in the nucleus. Functionally, may be involved in transcriptional regulation. Modulates various viral and cellular promoters in a promoter context-dependent manner. Does not bind DNA directly. This chain is Transcription elongation factor A protein-like 1, found in Mus musculus (Mouse).